A 327-amino-acid polypeptide reads, in one-letter code: Neurogenic differentiation factor 6-A (327 aa).

The disordered stretch occupies residues 17-85 (GANFPRDCVG…KKMTKARVDR (69 aa)). Positions 24 to 46 (CVGDLKGNKQEPFEKEETLSHVM) are enriched in basic and acidic residues. Positions 47 to 63 (DDDDSEKDEDEREDGQD) are enriched in acidic residues. Residues 68–80 (PRRRGPRKKKMTK) show a composition bias toward basic residues. Residues 74–80 (RKKKMTK) carry the Nuclear localization signal motif. Residues 88 to 140 (VRRMEANARERNRMHGLNNALDSLRKVVPCYSKTQKLSKIETLRLAKNYIWAL) enclose the bHLH domain.

In terms of assembly, efficient DNA binding requires dimerization with another bHLH protein. Embryonic olfactory bulbs. In adult, expressed in brain, eye, intestine, muscle, ovary and skin.

It localises to the nucleus. In terms of biological role, differentiation factor required for neurogenesis. Acts as an upstream activator of isl1. The polypeptide is Neurogenic differentiation factor 6-A (Danio rerio (Zebrafish)).